The sequence spans 121 residues: Estrogen receptor (121 aa).

In terms of domain architecture, NR LBD spans 1-121 (LFAPNLLLDR…IRHMSNKGME (121 aa)). C45 is lipidated: S-palmitoyl cysteine.

This sequence belongs to the nuclear hormone receptor family. NR3 subfamily. As to quaternary structure, binds DNA as a homodimer. Can form a heterodimer with ESR2. Interacts with coactivator NCOA5. Interacts with NCOA7; the interaction is ligand-inducible. Interacts with AKAP13, CUEDC2, HEXIM1, KDM5A, MAP1S, PELP1, SMARD1, and UBE1C. Interacts with MUC1; the interaction is stimulated by 7 beta-estradiol (E2) and enhances ERS1-mediated transcription. Interacts with DNTTIP2, and UIMC1. Interacts with KMT2D/MLL2. Interacts with ATAD2; the interaction is enhanced by estradiol. Interacts with KIF18A and LDB1. Interacts with RLIM (via its C-terminus). Interacts with MACROD1. Interacts with SH2D4A and PLCG. Interacts with SH2D4A; the interaction blocks binding to PLCG and inhibits estrogen-induced cell proliferation. Interacts with DYNLL1. Interacts with CCDC62; the interaction requires estradiol and appears to enhance the transcription of target genes. Interacts with NR2C1; the interaction prevents homodimerization of ESR1 and suppresses its transcriptional activity and cell growth. Interacts with DNAAF4. Interacts with PRMT2. Interacts with PI3KR1 or PIK3R2, SRC and PTK2/FAK1. Interacts with RBFOX2. Interacts with EP300; the interaction is estrogen-dependent and enhanced by CITED1. Interacts with CITED1; the interaction is estrogen-dependent. Interacts with FAM120B, FOXL2, PHB2 and SLC30A9. Interacts with coactivators NCOA3 and NCOA6. Interacts with STK3/MST2 only in the presence of SAV1 and vice-versa. Binds to CSNK1D. Interacts with NCOA2; NCOA2 can interact with ESR1 AF-1 and AF-2 domains simultaneously and mediate their transcriptional synergy. Interacts with DDX5. Interacts with NCOA1; the interaction seems to require a self-association of N-terminal and C-terminal regions. Interacts with ZNF366, DDX17, NFKB1, RELA, SP1 and SP3. Interacts with NRIP1. Interacts with GPER1; the interaction occurs in an estrogen-dependent manner. Interacts with CLOCK and the interaction is stimulated by estrogen. Interacts with TRIP4 (ufmylated); estrogen dependent. Interacts with LMTK3; the interaction phosphorylates ESR1 (in vitro) and protects it against proteasomal degradation. Interacts with CCAR2 (via N-terminus) in a ligand-independent manner. Interacts with ZFHX3. Interacts with SFR1 in a ligand-dependent and -independent manner. Interacts with DCAF13, LATS1 and DCAF1; regulates ESR1 ubiquitination and ubiquitin-mediated proteasomal degradation. Interacts (via DNA-binding domain) with POU4F2 (C-terminus); this interaction increases the estrogen receptor ESR1 transcriptional activity in a DNA- and ligand 17-beta-estradiol-independent manner. Interacts with ESRRB isoform 1. Interacts with UBE3A and WBP2. Interacts with GTF2B. Interacts with RBM39. In the absence of hormonal ligand, interacts with TACC1. Interacts with BAG1; the interaction is promoted in the absence of estradiol (17-beta-estradiol/E2). Interacts with and ubiquitinated by STUB1; the interaction is promoted in the absence of estradiol (17-beta-estradiol/E2). Interacts with NEDD8. In terms of processing, ubiquitinated; regulated by LATS1 via DCAF1 it leads to ESR1 proteasomal degradation. Deubiquitinated by OTUB1. Ubiquitinated by STUB1/CHIP; in the CA1 hippocampal region following loss of endogenous circulating estradiol (17-beta-estradiol/E2). Ubiquitinated by UBR5, leading to its degradation: UBR5 specifically recognizes and binds ligand-bound ESR1 when it is not associated with coactivators (NCOAs). In presence of NCOAs, the UBR5-degron is not accessible, preventing its ubiquitination and degradation. Post-translationally, palmitoylated at Cys-45 by ZDHHC7 and ZDHHC21. Palmitoylation is required for plasma membrane targeting and for rapid intracellular signaling via ERK and AKT kinases and cAMP generation, but not for signaling mediated by the nuclear hormone receptor. Phosphorylated by cyclin A/CDK2 and CK1. Phosphorylation probably enhances transcriptional activity. Dephosphorylation by PPP5C inhibits its transactivation activity. Phosphorylated by LMTK3 (in vitro). In terms of processing, dimethylated by PRMT1. Demethylated by JMJD6.

The protein localises to the nucleus. Its subcellular location is the cytoplasm. It is found in the golgi apparatus. The protein resides in the cell membrane. In terms of biological role, nuclear hormone receptor. The steroid hormones and their receptors are involved in the regulation of eukaryotic gene expression and affect cellular proliferation and differentiation in target tissues. Ligand-dependent nuclear transactivation involves either direct homodimer binding to a palindromic estrogen response element (ERE) sequence or association with other DNA-binding transcription factors, such as AP-1/c-Jun, c-Fos, ATF-2, Sp1 and Sp3, to mediate ERE-independent signaling. Ligand binding induces a conformational change allowing subsequent or combinatorial association with multiprotein coactivator complexes through LXXLL motifs of their respective components. Mutual transrepression occurs between the estrogen receptor (ER) and NF-kappa-B in a cell-type specific manner. Decreases NF-kappa-B DNA-binding activity and inhibits NF-kappa-B-mediated transcription from the IL6 promoter and displace RELA/p65 and associated coregulators from the promoter. Recruited to the NF-kappa-B response element of the CCL2 and IL8 promoters and can displace CREBBP. Present with NF-kappa-B components RELA/p65 and NFKB1/p50 on ERE sequences. Can also act synergistically with NF-kappa-B to activate transcription involving respective recruitment adjacent response elements; the function involves CREBBP. Can activate the transcriptional activity of TFF1. Also mediates membrane-initiated estrogen signaling involving various kinase cascades. Essential for MTA1-mediated transcriptional regulation of BRCA1 and BCAS3. Maintains neuronal survival in response to ischemic reperfusion injury when in the presence of circulating estradiol (17-beta-estradiol/E2). The sequence is that of Estrogen receptor (ESR1) from Macaca mulatta (Rhesus macaque).